The chain runs to 210 residues: Redox-sensing transcriptional repressor Rex (210 aa).

Positions 17–56 form a DNA-binding region, H-T-H motif; the sequence is KYYRYLAELMDNDVDRISSKELSEKIGFTASQIRQDLNNF. An NAD(+)-binding site is contributed by 91–96; the sequence is GAGNIG.

It belongs to the transcriptional regulatory Rex family. Homodimer.

It is found in the cytoplasm. Its function is as follows. Modulates transcription in response to changes in cellular NADH/NAD(+) redox state. The protein is Redox-sensing transcriptional repressor Rex of Clostridium novyi (strain NT).